Here is a 295-residue protein sequence, read N- to C-terminus: 4-hydroxy-tetrahydrodipicolinate synthase (295 aa).

Thr-48 lines the pyruvate pocket. The active-site Proton donor/acceptor is Tyr-136. Lys-164 serves as the catalytic Schiff-base intermediate with substrate. Ile-206 is a pyruvate binding site.

This sequence belongs to the DapA family. As to quaternary structure, homotetramer; dimer of dimers.

The protein resides in the cytoplasm. The enzyme catalyses L-aspartate 4-semialdehyde + pyruvate = (2S,4S)-4-hydroxy-2,3,4,5-tetrahydrodipicolinate + H2O + H(+). It functions in the pathway amino-acid biosynthesis; L-lysine biosynthesis via DAP pathway; (S)-tetrahydrodipicolinate from L-aspartate: step 3/4. Its function is as follows. Catalyzes the condensation of (S)-aspartate-beta-semialdehyde [(S)-ASA] and pyruvate to 4-hydroxy-tetrahydrodipicolinate (HTPA). The sequence is that of 4-hydroxy-tetrahydrodipicolinate synthase from Actinobacillus pleuropneumoniae serotype 5b (strain L20).